Here is a 96-residue protein sequence, read N- to C-terminus: Myticin-A (96 aa).

Positions 1–20 (MKATILLAVLVAVFVAGTEA) are cleaved as a signal peptide. Positions 61-96 (VNNPFRVNQVAKSINDLDYTPIMKSMENLDNGMDML) are cleaved as a propeptide — removed in mature form.

Post-translationally, contains four disulfide bonds. In terms of tissue distribution, hemocytes.

Its subcellular location is the secreted. Bacteriolytic activity against Gram-positive bacteria M.luteus, B.megaterium and A.viridans. This chain is Myticin-A, found in Mytilus galloprovincialis (Mediterranean mussel).